The following is a 400-amino-acid chain: Argininosuccinate synthase (400 aa).

ATP is bound by residues 10 to 18 (AYSGGVDTS) and A38. Y89 is an L-citrulline binding site. Residue G119 coordinates ATP. Residues T121, N125, and D126 each coordinate L-aspartate. An L-citrulline-binding site is contributed by N125. Residues R129, S177, S186, E262, and Y274 each coordinate L-citrulline.

The protein belongs to the argininosuccinate synthase family. Type 1 subfamily. In terms of assembly, homotetramer.

It localises to the cytoplasm. The enzyme catalyses L-citrulline + L-aspartate + ATP = 2-(N(omega)-L-arginino)succinate + AMP + diphosphate + H(+). The protein operates within amino-acid biosynthesis; L-arginine biosynthesis; L-arginine from L-ornithine and carbamoyl phosphate: step 2/3. This Nostoc punctiforme (strain ATCC 29133 / PCC 73102) protein is Argininosuccinate synthase.